Reading from the N-terminus, the 268-residue chain is Nitrite transporter NirC (268 aa).

Over 1–25 (MFTDTINKCAANAARIARLSANNPL) the chain is Cytoplasmic. Residues 26–46 (GFWVSSAMAGAYVGLGIILIF) form a helical membrane-spanning segment. Topologically, residues 47-59 (TLGNLLDPSVRPL) are periplasmic. Residues 60–80 (VMGATFGIALTLVIIAGSELF) traverse the membrane as a helical segment. Over 81–112 (TGHTMFLTFGVKAGSISHGQMWAILPQTWLGN) the chain is Cytoplasmic. A helical membrane pass occupies residues 113 to 133 (LVGSVFVAMLYSWGGGSLLPV). Residues 134–151 (DTSIVHSVALAKTTAPAM) are Periplasmic-facing. A helical transmembrane segment spans residues 152–172 (VLFFKGALCNWLVCLAIWMAL). The Cytoplasmic segment spans residues 173 to 179 (RTEGAAK). Residues 180–200 (FIAIWWCLLAFIASGYEHSIA) form a helical membrane-spanning segment. The Periplasmic portion of the chain corresponds to 201–225 (NMTLFALSWFGNHSEAYTLAGIGHN). A helical transmembrane segment spans residues 226–246 (LLWVTLGNTLSGAVFMGLGYW). At 247–268 (YATPKANRPVADKFNQTETAAG) the chain is on the cytoplasmic side.

This sequence belongs to the FNT transporter (TC 1.A.16) family.

It is found in the cell inner membrane. Catalyzes nitrite uptake and nitrite export across the cytoplasmic membrane. Is up to 10-fold more active than NarK or NarU in nitrite uptake for subsequent reduction in the cytoplasm by the NirB/NirD nitrite reductase. The polypeptide is Nitrite transporter NirC (nirC) (Escherichia coli (strain K12)).